Reading from the N-terminus, the 300-residue chain is RNA polymerase sigma factor RpoH (300 aa).

The sigma-70 factor domain-2 stretch occupies residues 53–122 (LVTSHLRLVA…IQEYILRSWS (70 aa)). Positions 77–80 (EVVS) match the Interaction with polymerase core subunit RpoC motif. The sigma-70 factor domain-4 stretch occupies residues 231–282 (AMGVLNDRERRIFEARRLAEDPVTLEELSSEFDISRERVRQIEVRAFEKVQE). Positions 255-274 (LEELSSEFDISRERVRQIEV) form a DNA-binding region, H-T-H motif.

It belongs to the sigma-70 factor family. RpoH subfamily. Interacts with the RNA polymerase core enzyme.

Its subcellular location is the cytoplasm. Functionally, sigma factors are initiation factors that promote the attachment of RNA polymerase to specific initiation sites and are then released. This sigma factor is involved in regulation of expression of heat shock genes. The protein is RNA polymerase sigma factor RpoH of Rhizobium radiobacter (Agrobacterium tumefaciens).